The primary structure comprises 414 residues: Protein DNA-DAMAGE INDUCIBLE 1 (414 aa).

The Ubiquitin-like domain occupies 1 to 76 (MRITVMTAGE…LMMMVSNASS (76 aa)). In terms of domain architecture, Peptidase A2 spans 213-292 (LKAFVDSGAQ…NMEFLFGLDM (80 aa)). Asp-218 is a catalytic residue. The interval 332-374 (ERVPNDASSSGATVPSGFTEKKNNTVANPTSQQPKRQNTSEGP) is disordered. Over residues 355–372 (NTVANPTSQQPKRQNTSE) the composition is skewed to polar residues. Positions 374–414 (PEFEAKIAKLVELGFSRDSVIQALKLFEGNEEQAAGFLFGG) constitute a UBA domain.

This sequence belongs to the DDI1 family. In terms of assembly, homodimer.

It localises to the cytoplasm. The protein localises to the cytosol. Receptor of ubiquitinated protein targeted to ubiquitin/proteasome-mediated proteolysis (UPP). Relatively weak affinity for both 'Lys-48'- and 'Lys-63'-linked ubiquitin chains with a slight preference for 'Lys-48-'linked chains of three or more ubiquitin units. This is Protein DNA-DAMAGE INDUCIBLE 1 from Arabidopsis thaliana (Mouse-ear cress).